Consider the following 90-residue polypeptide: Small ribosomal subunit protein bS16 (90 aa).

This sequence belongs to the bacterial ribosomal protein bS16 family.

The sequence is that of Small ribosomal subunit protein bS16 from Shouchella clausii (strain KSM-K16) (Alkalihalobacillus clausii).